A 1037-amino-acid polypeptide reads, in one-letter code: Presequence protease, mitochondrial (1037 aa).

The transit peptide at 1-28 (MWRCGGRQGLCVLRRLSGGHAHHRAWRW) directs the protein to the mitochondrion. Residue histidine 104 coordinates Zn(2+). The active-site Proton acceptor is the glutamate 107. Histidine 108 contacts Zn(2+). A disulfide bridge connects residues cysteine 119 and cysteine 556. Glutamate 180 is an active-site residue. Glutamate 205 is a Zn(2+) binding site. Lysine 759 is subject to N6-acetyllysine. Position 770 is an N6-acetyllysine; alternate (lysine 770). Position 770 is an N6-succinyllysine; alternate (lysine 770). The segment covering 804–814 (GRSKKERRPVR) has biased composition (basic residues). The disordered stretch occupies residues 804-834 (GRSKKERRPVRPHTVEKPVPSSSGGDAHVPH). Position 849 is an N6-succinyllysine (lysine 849). Residue lysine 884 is modified to N6-acetyllysine. Lysine 946 is modified (N6-succinyllysine).

It belongs to the peptidase M16 family. PreP subfamily. Monomer and homodimer; homodimerization is induced by binding of the substrate. Requires Zn(2+) as cofactor. In terms of processing, a disulfide bond locks the enzyme in the closed conformation preventing substrate entry into the catalytic chamber. As to expression, widely expressed. Expressed at higher level in muscle and heart compared to brain, pancreas, liver, lung and placenta.

The protein localises to the mitochondrion. The protein resides in the mitochondrion matrix. With respect to regulation, mainly exists in a closed and catalytically competent conformation but a closed-to-open switch allows substrate entry into the catalytic chamber. Substrate binding induces closure and dimerization. A disulfide bond may lock the enzyme in a closed conformation preventing substrate entry into the catalytic chamber, participating in redox regulation of the enzyme. Inhibited by metal-chelating agents. Inhibited by nickel and zinc excess, and slightly activated by manganese. Metalloendopeptidase of the mitochondrial matrix that functions in peptide cleavage and degradation rather than in protein processing. Has an ATP-independent activity. Specifically cleaves peptides in the range of 5 to 65 residues. Shows a preference for cleavage after small polar residues and before basic residues, but without any positional preference. Degrades the transit peptides of mitochondrial proteins after their cleavage. Also degrades other unstructured peptides. It is also able to degrade amyloid-beta protein 40, one of the peptides produced by APP processing, when it accumulates in mitochondrion. It is a highly efficient protease, at least toward amyloid-beta protein 40. Cleaves that peptide at a specific position and is probably not processive, releasing digested peptides intermediates that can be further cleaved subsequently. It is also able to degrade amyloid-beta protein 42. The protein is Presequence protease, mitochondrial of Homo sapiens (Human).